The sequence spans 70 residues: Small ribosomal subunit protein bS21B (70 aa).

It belongs to the bacterial ribosomal protein bS21 family.

The chain is Small ribosomal subunit protein bS21B from Paraburkholderia xenovorans (strain LB400).